The chain runs to 142 residues: Large ribosomal subunit protein uL13 (142 aa).

Belongs to the universal ribosomal protein uL13 family. As to quaternary structure, part of the 50S ribosomal subunit.

Its function is as follows. This protein is one of the early assembly proteins of the 50S ribosomal subunit, although it is not seen to bind rRNA by itself. It is important during the early stages of 50S assembly. This is Large ribosomal subunit protein uL13 from Alteromonas mediterranea (strain DSM 17117 / CIP 110805 / LMG 28347 / Deep ecotype).